A 161-amino-acid polypeptide reads, in one-letter code: Small ribosomal subunit protein uS9 (161 aa).

The interval 1-38 (MAQTITSLADLKQGPGAEPAGLSAEPQEPKLDKEGRAY) is disordered. The segment covering 27–38 (QEPKLDKEGRAY) has biased composition (basic and acidic residues).

The protein belongs to the universal ribosomal protein uS9 family.

The chain is Small ribosomal subunit protein uS9 from Rhodospirillum centenum (strain ATCC 51521 / SW).